The chain runs to 131 residues: D-ribose pyranase (131 aa).

His20 serves as the catalytic Proton donor. Substrate is bound by residues Asp28, His98, and 120–122 (YAN).

This sequence belongs to the RbsD / FucU family. RbsD subfamily. In terms of assembly, homodecamer.

It is found in the cytoplasm. It carries out the reaction beta-D-ribopyranose = beta-D-ribofuranose. It participates in carbohydrate metabolism; D-ribose degradation; D-ribose 5-phosphate from beta-D-ribopyranose: step 1/2. Catalyzes the interconversion of beta-pyran and beta-furan forms of D-ribose. The sequence is that of D-ribose pyranase from Clostridium novyi (strain NT).